A 132-amino-acid polypeptide reads, in one-letter code: ER membrane protein complex subunit 5 (132 aa).

The Cytoplasmic portion of the chain corresponds to 1-3 (MAS). Residues 4-22 (SIWKGLVGIGLFALAHAAF) form a helical membrane-spanning segment. At 23 to 43 (SAAQHRSYMRLTEKEDETLPI) the chain is on the lumenal side. The helical transmembrane segment at 44–63 (DIVLQTLLAFIVACYGIVHI) threads the bilayer. Residues 64–132 (AGEFKDMDAT…KLSKLESMHR (69 aa)) lie on the Cytoplasmic side of the membrane.

Belongs to the membrane magnesium transporter (TC 1.A.67) family. In terms of assembly, component of the ER membrane protein complex (EMC).

It is found in the endoplasmic reticulum membrane. Its subcellular location is the golgi apparatus membrane. It localises to the early endosome membrane. In terms of biological role, part of the endoplasmic reticulum membrane protein complex (EMC) that enables the energy-independent insertion into endoplasmic reticulum membranes of newly synthesized membrane proteins. Preferentially accommodates proteins with transmembrane domains that are weakly hydrophobic or contain destabilizing features such as charged and aromatic residues. Involved in the cotranslational insertion of multi-pass membrane proteins in which stop-transfer membrane-anchor sequences become ER membrane spanning helices. It is also required for the post-translational insertion of tail-anchored/TA proteins in endoplasmic reticulum membranes. By mediating the proper cotranslational insertion of N-terminal transmembrane domains in an N-exo topology, with translocated N-terminus in the lumen of the ER, controls the topology of multi-pass membrane proteins like the G protein-coupled receptors. By regulating the insertion of various proteins in membranes, it is indirectly involved in many cellular processes. May be involved in Mg(2+) transport. The polypeptide is ER membrane protein complex subunit 5 (Xenopus tropicalis (Western clawed frog)).